Consider the following 394-residue polypeptide: A-type flagellin (394 aa).

This sequence belongs to the bacterial flagellin family. Phosphorylated on tyrosine residue(s). In terms of processing, flagellin from strain 5939 but not from strain 170018 is glycosylated.

The protein localises to the secreted. It localises to the bacterial flagellum. Functionally, flagellin is the subunit protein which polymerizes to form the filaments of bacterial flagella. The polypeptide is A-type flagellin (fliC) (Pseudomonas aeruginosa).